A 295-amino-acid chain; its full sequence is Protoheme IX farnesyltransferase 2 (295 aa).

Helical transmembrane passes span 9–29 (ITKPGIIFGNVLSVAGGFFLA), 36–56 (FALFLAVVIGTSLVVASGCVF), 83–103 (LTLALVYATLLGVAGFSLLYV), 108–128 (LSAFCALIGFIVYVGFYSLWL), 135–155 (GTLVGSLSGAMPPVIGYCAVS), 163–183 (VTLLVMFSLWQMPHSFAIAIF), 209–229 (IVLYVLAFVLATLMLTLGGYA), 230–250 (GLGYLAVAAAMGLYWLYMAWG), and 264–284 (VFGFSILTVTALSVMMGVDSQ).

It belongs to the UbiA prenyltransferase family. Protoheme IX farnesyltransferase subfamily.

The protein resides in the cell inner membrane. The enzyme catalyses heme b + (2E,6E)-farnesyl diphosphate + H2O = Fe(II)-heme o + diphosphate. The protein operates within porphyrin-containing compound metabolism; heme O biosynthesis; heme O from protoheme: step 1/1. Its function is as follows. Converts heme B (protoheme IX) to heme O by substitution of the vinyl group on carbon 2 of heme B porphyrin ring with a hydroxyethyl farnesyl side group. The chain is Protoheme IX farnesyltransferase 2 from Pseudomonas putida (strain W619).